Reading from the N-terminus, the 692-residue chain is Threonine--tRNA ligase (692 aa).

Positions 1-20 (MSAPAQPAPGVDGGDPSQAR) are disordered. Residues 1-74 (MSAPAQPAPG…DVDTDITPVA (74 aa)) enclose the TGS domain. Positions 269–575 (DHRKLGVELD…LTEHYAGAFP (307 aa)) are catalytic. Zn(2+) contacts are provided by Cys374, His425, and His552.

It belongs to the class-II aminoacyl-tRNA synthetase family. In terms of assembly, homodimer. Requires Zn(2+) as cofactor.

The protein resides in the cytoplasm. The enzyme catalyses tRNA(Thr) + L-threonine + ATP = L-threonyl-tRNA(Thr) + AMP + diphosphate + H(+). In terms of biological role, catalyzes the attachment of threonine to tRNA(Thr) in a two-step reaction: L-threonine is first activated by ATP to form Thr-AMP and then transferred to the acceptor end of tRNA(Thr). Also edits incorrectly charged L-seryl-tRNA(Thr). The polypeptide is Threonine--tRNA ligase (Mycobacterium tuberculosis (strain CDC 1551 / Oshkosh)).